The chain runs to 233 residues: MGLPFQIEYGQTTGRPELIEDALRQFSAALALTADAGGLYVHGYDESRNQRWANPASGKSPAIWARAVGWLAMALVDALVILPDDSATAELRERTRRLLAGIIARQTQAGLWMQVLDNQGLAGNYAETSASAMFAYALLRAARLGLLRGEEAKAALSAGRQALAALLETRLELDEQGVARLTGIVHVAGLGGFDGNYRDGTPDYYLTEPVVSDDAKGVGPLMMAYAESLLLAR.

The protein belongs to the glycosyl hydrolase 88 family.

Its function is as follows. Seems to regulate the surface properties of the bacterium in the presence of plant cells or plant cell extracts. Mutations in this protein are responsible for an increased aggregation of the bacteria in the presence of pea root cap cells. The protein is Protein Atu3128 of Agrobacterium fabrum (strain C58 / ATCC 33970) (Agrobacterium tumefaciens (strain C58)).